Reading from the N-terminus, the 606-residue chain is Mannan endo-1,4-beta-mannosidase A (606 aa).

Residues methionine 1 to serine 19 form the signal peptide. The CBM6 domain maps to valine 22 to asparagine 140. Residues proline 164–aspartate 458 enclose the GH26 domain. Residue tryptophan 285 coordinates substrate. The Proton donor role is filled by glutamate 318. The substrate site is built by tryptophan 323 and tyrosine 378. Glutamate 406 functions as the Nucleophile in the catalytic mechanism. A linker region spans residues serine 472–serine 489. 3 consecutive CBM10 domains span residues glutamate 491–valine 527, serine 530–valine 566, and serine 569–leucine 605. Tryptophan 493 contributes to the substrate binding site.

The protein belongs to the glycosyl hydrolase 26 family.

It catalyses the reaction Random hydrolysis of (1-&gt;4)-beta-D-mannosidic linkages in mannans, galactomannans and glucomannans.. Hydrolyzes 1,4-beta linked polysaccharide backbones of mannans, one of the major hemicellulose components in hardwoods and softwoods. Shows very high activity against mannohexaose but not against mannopentaose and smaller mannooligosaccharides. The major products released from mannooligosaccharide hydrolysis are mannose and mannobiose. The reiterated 40 AA domain is involved in binding the cellulase-hemicellulase complex. This chain is Mannan endo-1,4-beta-mannosidase A (MANA), found in Piromyces sp.